A 451-amino-acid polypeptide reads, in one-letter code: Tubulin alpha-1 chain (451 aa).

Position 11 (Q11) interacts with GTP. K40 bears the N6-acetyllysine mark. GTP contacts are provided by E71, T145, T179, N206, and N228. E71 is a Mg(2+) binding site. E254 is a catalytic residue. Residues E429–Y451 are disordered. Acidic residues predominate over residues D431–Y451.

Belongs to the tubulin family. Dimer of alpha and beta chains. A typical microtubule is a hollow water-filled tube with an outer diameter of 25 nm and an inner diameter of 15 nM. Alpha-beta heterodimers associate head-to-tail to form protofilaments running lengthwise along the microtubule wall with the beta-tubulin subunit facing the microtubule plus end conferring a structural polarity. Microtubules usually have 13 protofilaments but different protofilament numbers can be found in some organisms and specialized cells. Mg(2+) serves as cofactor. In terms of processing, undergoes a tyrosination/detyrosination cycle, the cyclic removal and re-addition of a C-terminal tyrosine residue by the enzymes tubulin tyrosine carboxypeptidase (TTCP) and tubulin tyrosine ligase (TTL), respectively. Acetylation of alpha chains at Lys-40 stabilizes microtubules and affects affinity and processivity of microtubule motors. This modification has a role in multiple cellular functions, ranging from cell motility, cell cycle progression or cell differentiation to intracellular trafficking and signaling.

It is found in the cytoplasm. The protein resides in the cytoskeleton. It catalyses the reaction GTP + H2O = GDP + phosphate + H(+). Its function is as follows. Tubulin is the major constituent of microtubules, a cylinder consisting of laterally associated linear protofilaments composed of alpha- and beta-tubulin heterodimers. Microtubules grow by the addition of GTP-tubulin dimers to the microtubule end, where a stabilizing cap forms. Below the cap, tubulin dimers are in GDP-bound state, owing to GTPase activity of alpha-tubulin. The sequence is that of Tubulin alpha-1 chain (TUBA1) from Anemia phyllitidis (Fern).